A 95-amino-acid chain; its full sequence is Small ribosomal subunit protein bS16 (95 aa).

This sequence belongs to the bacterial ribosomal protein bS16 family.

The chain is Small ribosomal subunit protein bS16 from Thermotoga maritima (strain ATCC 43589 / DSM 3109 / JCM 10099 / NBRC 100826 / MSB8).